A 178-amino-acid polypeptide reads, in one-letter code: Adenine phosphoribosyltransferase (178 aa).

Belongs to the purine/pyrimidine phosphoribosyltransferase family. Homodimer.

The protein resides in the cytoplasm. It carries out the reaction AMP + diphosphate = 5-phospho-alpha-D-ribose 1-diphosphate + adenine. It functions in the pathway purine metabolism; AMP biosynthesis via salvage pathway; AMP from adenine: step 1/1. In terms of biological role, catalyzes a salvage reaction resulting in the formation of AMP, that is energically less costly than de novo synthesis. The sequence is that of Adenine phosphoribosyltransferase from Streptomyces clavuligerus.